The following is a 517-amino-acid chain: GMP synthase [glutamine-hydrolyzing] (517 aa).

In terms of domain architecture, Glutamine amidotransferase type-1 spans 9–199; that stretch reads RILILDFGSQ…VLNVCGCEGL (191 aa). Cysteine 86 acts as the Nucleophile in catalysis. Active-site residues include histidine 173 and glutamate 175. The region spanning 200-392 is the GMPS ATP-PPase domain; that stretch reads WTSASIIEDA…LGLPYNMLYR (193 aa). ATP is bound at residue 227–233; that stretch reads SGGVDSS.

In terms of assembly, homodimer.

The enzyme catalyses XMP + L-glutamine + ATP + H2O = GMP + L-glutamate + AMP + diphosphate + 2 H(+). It functions in the pathway purine metabolism; GMP biosynthesis; GMP from XMP (L-Gln route): step 1/1. Catalyzes the synthesis of GMP from XMP. The protein is GMP synthase [glutamine-hydrolyzing] of Aliivibrio fischeri (strain MJ11) (Vibrio fischeri).